A 145-amino-acid chain; its full sequence is Ecdysteroid-regulated 16 kDa protein (145 aa).

Residues 1–16 (MLFYITVTVLLVSAQA) form the signal peptide. 2 disulfides stabilise this stretch: C22/C137 and C90/C97. N51 is a glycosylation site (N-linked (GlcNAc...) asparagine).

This sequence belongs to the NPC2 family.

Its subcellular location is the secreted. The chain is Ecdysteroid-regulated 16 kDa protein (ESR16) from Manduca sexta (Tobacco hawkmoth).